Here is a 611-residue protein sequence, read N- to C-terminus: Cilia- and flagella-associated protein 100 (611 aa).

The span at 1 to 17 (MSEIPSTIVSKNMTNDK) shows a compositional bias: polar residues. Residues 1–57 (MSEIPSTIVSKNMTNDKNSLESMNISSSSSTEENPKKQARKNEEHGPDPSANPFHLS) are disordered. Over residues 20 to 32 (LESMNISSSSSTE) the composition is skewed to low complexity. Basic and acidic residues predominate over residues 33–47 (ENPKKQARKNEEHGP). Coiled coils occupy residues 101–128 (SLRRQLQLEDKQEDLEARAEAEHQRAFR), 164–203 (ALDVKRREIQRLETLATKEEARLERAEKSLEKDAALFDEF), and 230–257 (LEIRDLTTQIVNIKSEISRFEDTLKHYK). 2 disordered regions span residues 287–323 (EVSEASKESSVNSTPGDKGPGIKGKASSMWAKEGQGT) and 338–380 (SPSY…GEEP). The segment covering 338-357 (SPSYLSSPQQGSQPSESSGG) has biased composition (low complexity). Coiled coils occupy residues 393–432 (VFRELEEQNLSLIQNSQETEKTLEELSHTLKHTQIRMDRE) and 526–578 (QVKI…RGRT).

Belongs to the CFAP100 family.

The protein resides in the cytoplasm. It localises to the cytoskeleton. The protein localises to the cilium axoneme. Functionally, may play a role in ciliary/flagellar motility by regulating the assembly and the activity of axonemal inner dynein arm. The protein is Cilia- and flagella-associated protein 100 of Homo sapiens (Human).